The sequence spans 196 residues: Imidazoleglycerol-phosphate dehydratase (196 aa).

Belongs to the imidazoleglycerol-phosphate dehydratase family.

It is found in the cytoplasm. It catalyses the reaction D-erythro-1-(imidazol-4-yl)glycerol 3-phosphate = 3-(imidazol-4-yl)-2-oxopropyl phosphate + H2O. It functions in the pathway amino-acid biosynthesis; L-histidine biosynthesis; L-histidine from 5-phospho-alpha-D-ribose 1-diphosphate: step 6/9. The sequence is that of Imidazoleglycerol-phosphate dehydratase from Clostridium novyi (strain NT).